The following is a 412-amino-acid chain: MTEADGLRQRRPLRPQVVTDDNRTPEAKGGSSFSGRVFRATFLMLAAFLTIPLLGALVLLDSPIDPEPLSFKEPPLFLGVLQPNTKLQQAERLFENQLVGPESIANIGDVMFTGTADGRVVKLENGEVETIARFGSGPCKTRDDEPACGRPLGIRAGPNGTLFVVDAYKGLFEVNPWKREVKLLLSSETPIEGRKMSFLNDLTVTRDGRKIYFTDSSSKWQRRDYLLLLMEGTDDGRLLEYDTQTKEVKVLLDHLRFPNGVQLSPAEDFVLVVELAMVRIRRFYVSGLMKGGADVFVENLPGFPDNIRASSSGGYWVSMAAIRANPGFSMLDFLSERPFLKKVIFKLFSQETVMKFVPRYSLVLELSDSGTFLRSLHDPEGQVVTYVSEAHEHSGHLYLGSFRAPYLCRLRL.

Residues 1 to 32 (MTEADGLRQRRPLRPQVVTDDNRTPEAKGGSS) form a disordered region. The Cytoplasmic portion of the chain corresponds to 1 to 39 (MTEADGLRQRRPLRPQVVTDDNRTPEAKGGSSFSGRVFR). A Phosphothreonine modification is found at threonine 19. Residues 40-60 (ATFLMLAAFLTIPLLGALVLL) traverse the membrane as a helical segment. At 61–412 (DSPIDPEPLS…RAPYLCRLRL (352 aa)) the chain is on the extracellular side. N-linked (GlcNAc...) asparagine glycosylation occurs at asparagine 159.

This sequence belongs to the strictosidine synthase family.

Its subcellular location is the membrane. Its function is as follows. Exhibits strong arylesterase activity with beta-naphthyl acetate and phenyl acetate. May play a role in adipocyte differentiation. The protein is Adipocyte plasma membrane-associated protein (APMAP) of Bos taurus (Bovine).